The sequence spans 151 residues: MQVILMETVEALGLAGTEVKVAPGYARNFLFPRQKAMAATPANRRRMEQMRAKIELQIAKERGAAQEAAKKLEGVVCRISAKVSNEGRLYGSVTVGDIVEALAARDITVSKKMVLLRENIKEVGTYPVGIYLYKDVVPEISVEIVADEKAE.

Belongs to the bacterial ribosomal protein bL9 family.

Functionally, binds to the 23S rRNA. This chain is Large ribosomal subunit protein bL9, found in Desulfosudis oleivorans (strain DSM 6200 / JCM 39069 / Hxd3) (Desulfococcus oleovorans).